Here is a 267-residue protein sequence, read N- to C-terminus: tRNA pseudouridine synthase A (267 aa).

Aspartate 51 (nucleophile) is an active-site residue. Residue tyrosine 109 participates in substrate binding.

Belongs to the tRNA pseudouridine synthase TruA family. As to quaternary structure, homodimer.

It catalyses the reaction uridine(38/39/40) in tRNA = pseudouridine(38/39/40) in tRNA. Formation of pseudouridine at positions 38, 39 and 40 in the anticodon stem and loop of transfer RNAs. This Staphylococcus aureus (strain USA300) protein is tRNA pseudouridine synthase A.